Consider the following 444-residue polypeptide: Deoxyguanosinetriphosphate triphosphohydrolase-like protein (444 aa).

In terms of domain architecture, HD spans 59 to 250; it reads RLTHSLEVSQ…MELADDIAYA (192 aa).

This sequence belongs to the dGTPase family. Type 2 subfamily.

This chain is Deoxyguanosinetriphosphate triphosphohydrolase-like protein, found in Shewanella halifaxensis (strain HAW-EB4).